The sequence spans 1479 residues: Putative receptor-type tyrosine-protein phosphatase mosPTP-1 (1479 aa).

A signal peptide spans 1–28 (MKPRLLTTVTTWLALVLPVVYLSRPCQA). At 29–365 (LPTVNFTANY…RQSYNDYNLA (337 aa)) the chain is on the extracellular side. 7 N-linked (GlcNAc...) asparagine glycosylation sites follow: asparagine 33, asparagine 40, asparagine 146, asparagine 182, asparagine 248, asparagine 294, and asparagine 306. Fibronectin type-III domains follow at residues 143–242 (KPLN…AGPS) and 243–346 (APKV…VQLN). A helical membrane pass occupies residues 366-386 (VMIGILICCFGLLFIVLTILL). The Cytoplasmic portion of the chain corresponds to 387–1479 (WKKCFHAAYY…AKLRAVVRVE (1093 aa)). Tyrosine-protein phosphatase domains follow at residues 452–717 (FSKE…LVEA) and 740–992 (IDSQ…LSYM). The active-site Phosphocysteine intermediate is the cysteine 658.

This sequence belongs to the protein-tyrosine phosphatase family. Receptor class subfamily. As to quaternary structure, interacts with C-type lectin mosGCTL-1. Interacts with C-type lectin mosGCTL-7.

The protein localises to the cell membrane. It catalyses the reaction O-phospho-L-tyrosyl-[protein] + H2O = L-tyrosyl-[protein] + phosphate. Putative protein tyrosine-protein phosphatase. In terms of biological role, (Microbial infection) Facilitates West Nile virus infection in mosquitoes. This Culex quinquefasciatus (Southern house mosquito) protein is Putative receptor-type tyrosine-protein phosphatase mosPTP-1.